Reading from the N-terminus, the 759-residue chain is uncharacterized protein (759 aa).

Low complexity-rich tracts occupy residues 1–36, 142–211, and 221–347; these read MSSN…NETN, QQQN…NQHH, and NHSN…GSSS. 5 disordered regions span residues 1–47, 142–380, 409–428, 463–504, and 654–759; these read MSSN…AQTP, QQQN…PSIG, NNNC…GLGY, IING…NFEN, and LVDD…YLNK. Positions 348-360 are enriched in polar residues; the sequence is PFQDQARSPSSSF. Composition is skewed to low complexity over residues 463–495 and 660–747; these read IING…GNNN and HISN…DNNN.

This is an uncharacterized protein from Dictyostelium discoideum (Social amoeba).